The sequence spans 59 residues: Sec-independent protein translocase protein TatA 1 (59 aa).

The helical transmembrane segment at 3–23 threads the bilayer; sequence FPLPWQLILILLVILVIFGAS.

The protein belongs to the TatA/E family. Forms a complex with TatC.

Its subcellular location is the cell inner membrane. Part of the twin-arginine translocation (Tat) system that transports large folded proteins containing a characteristic twin-arginine motif in their signal peptide across membranes. TatA could form the protein-conducting channel of the Tat system. This is Sec-independent protein translocase protein TatA 1 from Aquifex aeolicus (strain VF5).